We begin with the raw amino-acid sequence, 343 residues long: UPF0157 protein YqkA (343 aa).

Residues K8–S144 form the N-acetyltransferase domain. Positions V135–L343 are UPF0157.

In the C-terminal section; belongs to the UPF0157 (GrpB) family.

The chain is UPF0157 protein YqkA (yqkA) from Bacillus subtilis (strain 168).